The following is a 333-amino-acid chain: Holliday junction branch migration complex subunit RuvB (333 aa).

A large ATPase domain (RuvB-L) region spans residues 1–182 (MEERLVSGEV…FGVISRLEYY (182 aa)). ATP is bound by residues L21, R22, G63, K66, T67, T68, 129-131 (EDY), R172, Y182, and R219. Residue T67 coordinates Mg(2+). The segment at 183–253 (HVDQLAQIIE…LAVEALERLQ (71 aa)) is small ATPAse domain (RuvB-S). Residues 256 to 333 (RLGLDQIDHK…THLGMEVPKR (78 aa)) are head domain (RuvB-H). Residues R311 and R316 each coordinate DNA.

The protein belongs to the RuvB family. Homohexamer. Forms an RuvA(8)-RuvB(12)-Holliday junction (HJ) complex. HJ DNA is sandwiched between 2 RuvA tetramers; dsDNA enters through RuvA and exits via RuvB. An RuvB hexamer assembles on each DNA strand where it exits the tetramer. Each RuvB hexamer is contacted by two RuvA subunits (via domain III) on 2 adjacent RuvB subunits; this complex drives branch migration. In the full resolvosome a probable DNA-RuvA(4)-RuvB(12)-RuvC(2) complex forms which resolves the HJ.

The protein localises to the cytoplasm. The enzyme catalyses ATP + H2O = ADP + phosphate + H(+). In terms of biological role, the RuvA-RuvB-RuvC complex processes Holliday junction (HJ) DNA during genetic recombination and DNA repair, while the RuvA-RuvB complex plays an important role in the rescue of blocked DNA replication forks via replication fork reversal (RFR). RuvA specifically binds to HJ cruciform DNA, conferring on it an open structure. The RuvB hexamer acts as an ATP-dependent pump, pulling dsDNA into and through the RuvAB complex. RuvB forms 2 homohexamers on either side of HJ DNA bound by 1 or 2 RuvA tetramers; 4 subunits per hexamer contact DNA at a time. Coordinated motions by a converter formed by DNA-disengaged RuvB subunits stimulates ATP hydrolysis and nucleotide exchange. Immobilization of the converter enables RuvB to convert the ATP-contained energy into a lever motion, pulling 2 nucleotides of DNA out of the RuvA tetramer per ATP hydrolyzed, thus driving DNA branch migration. The RuvB motors rotate together with the DNA substrate, which together with the progressing nucleotide cycle form the mechanistic basis for DNA recombination by continuous HJ branch migration. Branch migration allows RuvC to scan DNA until it finds its consensus sequence, where it cleaves and resolves cruciform DNA. The chain is Holliday junction branch migration complex subunit RuvB from Geobacillus kaustophilus (strain HTA426).